Here is a 199-residue protein sequence, read N- to C-terminus: Prolactin-2 (199 aa).

3 disulfide bridges follow: cysteine 4–cysteine 11, cysteine 58–cysteine 174, and cysteine 191–cysteine 199.

It belongs to the somatotropin/prolactin family.

It localises to the secreted. The protein is Prolactin-2 of Alligator mississippiensis (American alligator).